Here is a 432-residue protein sequence, read N- to C-terminus: Glutamate-1-semialdehyde 2,1-aminomutase (432 aa).

Lys-270 carries the N6-(pyridoxal phosphate)lysine modification.

This sequence belongs to the class-III pyridoxal-phosphate-dependent aminotransferase family. HemL subfamily. Homodimer. Pyridoxal 5'-phosphate is required as a cofactor.

It is found in the cytoplasm. The enzyme catalyses (S)-4-amino-5-oxopentanoate = 5-aminolevulinate. Its pathway is porphyrin-containing compound metabolism; protoporphyrin-IX biosynthesis; 5-aminolevulinate from L-glutamyl-tRNA(Glu): step 2/2. This is Glutamate-1-semialdehyde 2,1-aminomutase from Acinetobacter baumannii (strain ACICU).